We begin with the raw amino-acid sequence, 200 residues long: ATP-dependent Clp protease proteolytic subunit (200 aa).

Catalysis depends on Ser-101, which acts as the Nucleophile. His-126 is a catalytic residue.

Belongs to the peptidase S14 family. As to quaternary structure, component of the chloroplastic Clp protease core complex.

The protein localises to the plastid. It localises to the chloroplast stroma. The catalysed reaction is Hydrolysis of proteins to small peptides in the presence of ATP and magnesium. alpha-casein is the usual test substrate. In the absence of ATP, only oligopeptides shorter than five residues are hydrolyzed (such as succinyl-Leu-Tyr-|-NHMec, and Leu-Tyr-Leu-|-Tyr-Trp, in which cleavage of the -Tyr-|-Leu- and -Tyr-|-Trp bonds also occurs).. Functionally, cleaves peptides in various proteins in a process that requires ATP hydrolysis. Has a chymotrypsin-like activity. Plays a major role in the degradation of misfolded proteins. This chain is ATP-dependent Clp protease proteolytic subunit, found in Ostreococcus tauri.